The primary structure comprises 320 residues: MRSAQVYRWQIPMDAGVVLRDRRLKTRDGLYVCLREGEREGWGEISPLPGFSQETWEDAQSVLLAWVNNWLAGDCELPQMPSVAFGVSCALAELAETLPQAANYRAAPLCNGDPDDLILKLADMPGEKVAKVKVGLYEAVRDGMVVNLLLEAIPDLHLRLDANRAWTPLKGQQFAKYVNLDYRHRIAFLEEPCKTRDDSRAFARETGIAIAWDESLREPDFAFVAEEGVRAVVIKPTLTGSLDKVREQVQAAHALGLTAVISSSIESSLGLTQLARIAAWLTPDTIPGLDTLDLMQAQQVRRWPGSLLPLVDVDALEQLL.

Lys133 serves as the catalytic Proton donor. Residues Asp161, Glu190, and Asp213 each coordinate Mg(2+). Lys235 (proton acceptor) is an active-site residue.

Belongs to the mandelate racemase/muconate lactonizing enzyme family. MenC type 1 subfamily. The cofactor is a divalent metal cation.

It carries out the reaction (1R,6R)-6-hydroxy-2-succinyl-cyclohexa-2,4-diene-1-carboxylate = 2-succinylbenzoate + H2O. It participates in quinol/quinone metabolism; 1,4-dihydroxy-2-naphthoate biosynthesis; 1,4-dihydroxy-2-naphthoate from chorismate: step 4/7. Its pathway is quinol/quinone metabolism; menaquinone biosynthesis. Functionally, converts 2-succinyl-6-hydroxy-2,4-cyclohexadiene-1-carboxylate (SHCHC) to 2-succinylbenzoate (OSB). The protein is o-succinylbenzoate synthase of Escherichia coli O127:H6 (strain E2348/69 / EPEC).